The chain runs to 120 residues: Acyl carrier protein, mitochondrial (120 aa).

Residues 43–117 (KEITDRVIGV…ETISYLRKTP (75 aa)) form the Carrier domain. Ser-77 carries the post-translational modification O-(pantetheine 4'-phosphoryl)serine.

This sequence belongs to the acyl carrier protein (ACP) family. Complex I is composed of about 45 different subunits. In terms of processing, 4'-phosphopantetheine is transferred from CoA to a specific serine of apo-ACP by acpS. This modification is essential for activity because fatty acids are bound in thioester linkage to the sulfhydryl of the prosthetic group.

Its subcellular location is the mitochondrion. It functions in the pathway lipid metabolism; fatty acid biosynthesis. Carrier of the growing fatty acid chain in fatty acid biosynthesis. May be involved in the synthesis of very-long-chain fatty acids. Accessory and non-catalytic subunit of the mitochondrial membrane respiratory chain NADH dehydrogenase (Complex I), which functions in the transfer of electrons from NADH to the respiratory chain. In Dictyostelium discoideum (Social amoeba), this protein is Acyl carrier protein, mitochondrial (ndufab1).